The following is a 380-amino-acid chain: Probable tRNA-splicing endonuclease subunit sen2 (380 aa).

Residues Tyr281, His289, and Lys325 contribute to the active site.

Belongs to the tRNA-intron endonuclease family. In terms of assembly, heterotetramer composed of sen2, sen15, sen34 and sen54. Interacts directly with sen54.

It catalyses the reaction pretRNA = a 3'-half-tRNA molecule with a 5'-OH end + a 5'-half-tRNA molecule with a 2',3'-cyclic phosphate end + an intron with a 2',3'-cyclic phosphate and a 5'-hydroxyl terminus.. Functionally, constitutes one of the two catalytic subunit of the tRNA-splicing endonuclease complex, a complex responsible for identification and cleavage of the splice sites in pre-tRNA. It cleaves pre-tRNA at the 5'- and 3'-splice sites to release the intron. The products are an intron and two tRNA half-molecules bearing 2',3'-cyclic phosphate and 5'-OH termini. There are no conserved sequences at the splice sites, but the intron is invariably located at the same site in the gene, placing the splice sites an invariant distance from the constant structural features of the tRNA body. This subunit may anchor the endonuclease complex to the nuclear membrane. Probably carries the active site for 5'-splice site cleavage. This is Probable tRNA-splicing endonuclease subunit sen2 (sen2) from Schizosaccharomyces pombe (strain 972 / ATCC 24843) (Fission yeast).